Here is a 148-residue protein sequence, read N- to C-terminus: Large-conductance mechanosensitive channel (148 aa).

The next 2 helical transmembrane spans lie at 9-29 and 79-99; these read AFAVKGNVVDMAVGIIIGAAF and IQTVIDFIIVAFAIFMGVKAI.

It belongs to the MscL family. As to quaternary structure, homopentamer.

The protein resides in the cell inner membrane. In terms of biological role, channel that opens in response to stretch forces in the membrane lipid bilayer. May participate in the regulation of osmotic pressure changes within the cell. This is Large-conductance mechanosensitive channel from Pseudomonas savastanoi pv. phaseolicola (strain 1448A / Race 6) (Pseudomonas syringae pv. phaseolicola (strain 1448A / Race 6)).